Consider the following 340-residue polypeptide: MTKKRITFGLLVLMVCVILFVLYVQLRNKDSIPVQSSAIHPEEDRIFFIYSNPFIKESVLLSTSTGERFNRRTFKVADVPYIQTKSYASTDLVLLAEHEPFYYTLEKDVIKEHPLSDPFAFWYEGKDVTIEAYNVDTTGNEIHINDRKTKKEYTLTLPPLVTMGASDENFIYIIQSMSIYVIDRKTEEMIETLSLASYADQFADSEEFIVASSDHKLTVIEKGTWKTTYIAYPEDLEYADTVYYDKESGSFYVAYEDKEGGANLLEYGEDFSIHTYSLKFPYMEAKFKGNLLYIVAQEEHKKGIGGYVGVFDIHSKEMLYQFDLPEEQVKVQDFVVVDNK.

A helical membrane pass occupies residues 6-26 (ITFGLLVLMVCVILFVLYVQL).

Its subcellular location is the cell membrane. This is an uncharacterized protein from Bacillus subtilis (strain 168).